The sequence spans 376 residues: 5-hydroxytryptamine receptor 1D (376 aa).

A disordered region spans residues methionine 1–alanine 22. 3 N-linked (GlcNAc...) asparagine glycosylation sites follow: asparagine 5, asparagine 17, and asparagine 21. 3 helical membrane-spanning segments follow: residues valine 39–leucine 64, leucine 76–alanine 97, and leucine 110–leucine 134. The cysteines at positions 111 and 188 are disulfide-linked. Residues aspartate 118 and cysteine 122 each contribute to the serotonin site. Residues aspartate 135–tyrosine 137 carry the DRY motif; important for ligand-induced conformation changes motif. 4 helical membrane-spanning segments follow: residues alanine 155–tryptophan 176, isoleucine 195–serine 218, lysine 300–isoleucine 325, and alanine 335–phenylalanine 358. Serine 320 is a serotonin binding site. The short motif at asparagine 351–tyrosine 355 is the NPxxY motif; important for ligand-induced conformation changes and signaling element.

This sequence belongs to the G-protein coupled receptor 1 family. Homodimer. Heterodimer with HTR1B.

It is found in the cell membrane. G-protein coupled receptor for 5-hydroxytryptamine (serotonin). Also functions as a receptor for ergot alkaloid derivatives, various anxiolytic and antidepressant drugs and other psychoactive substances. Ligand binding causes a conformation change that triggers signaling via guanine nucleotide-binding proteins (G proteins) and modulates the activity of downstream effectors, such as adenylate cyclase. HTR1D is coupled to G(i)/G(o) G alpha proteins and mediates inhibitory neurotransmission by inhibiting adenylate cyclase activity. Regulates the release of 5-hydroxytryptamine in the brain, and thereby affects neural activity. May also play a role in regulating the release of other neurotransmitters. May play a role in vasoconstriction. The protein is 5-hydroxytryptamine receptor 1D (HTR1D) of Cavia porcellus (Guinea pig).